Reading from the N-terminus, the 209-residue chain is Cerebral peptide 1 (209 aa).

Residues 1–20 form the signal peptide; that stretch reads MLLAKISVVVLLLAIDGTSS. Over residues 21–39 the composition is skewed to polar residues; sequence SESTDNVVLSSSPDSQKAA. Positions 21–43 are cleaved as a propeptide — connecting peptide 1; that stretch reads SESTDNVVLSSSPDSQKAATSRH. The interval 21–56 is disordered; it reads SESTDNVVLSSSPDSQKAATSRHKRAPGWGKRSSLN. Tryptophan amide is present on Trp49. The propeptide at 53–77 is connecting peptide 2; that stretch reads SSLNDEDLFADSDSAQELLDSVAAL. Tryptophan amide is present on residues Trp83 and Trp105. A disordered region spans residues 98-169; the sequence is EAKRAPGWGK…APGWGKRSGG (72 aa). A propeptide spans 109 to 122 (connecting peptide 4); it reads GQEIDVDEDGSEQE. 6 positions are modified to tryptophan amide: Trp128, Trp135, Trp142, Trp149, Trp156, and Trp163. Positions 167–191 are cleaved as a propeptide — connecting peptide 5; it reads SGGDYCETLEKMVDAYIYKAVEVDS. A disulfide bridge connects residues Cys172 and Cys197.

Homodimer; disulfide-linked. Cerebral peptide 1 is expressed in the cerebral, pedal and buccal ganglia and B1 and B2 neurons. APGW-amide is expressed in buccal ganglia and several neurons.

The protein localises to the secreted. Its function is as follows. May function as a peptide transmitter. In Aplysia californica (California sea hare), this protein is Cerebral peptide 1.